A 565-amino-acid chain; its full sequence is 2-isopropylmalate synthase (565 aa).

The 276-residue stretch at 37-312 (PRWCSVDLRD…DPMIDLSDID (276 aa)) folds into the Pyruvate carboxyltransferase domain. 4 residues coordinate Mg(2+): D46, H251, H253, and N287. Positions 446-565 (EGGDPAASLE…SAVNRASRES (120 aa)) are regulatory domain.

The protein belongs to the alpha-IPM synthase/homocitrate synthase family. LeuA type 2 subfamily. Homodimer. The cofactor is Mg(2+).

It is found in the cytoplasm. It catalyses the reaction 3-methyl-2-oxobutanoate + acetyl-CoA + H2O = (2S)-2-isopropylmalate + CoA + H(+). It functions in the pathway amino-acid biosynthesis; L-leucine biosynthesis; L-leucine from 3-methyl-2-oxobutanoate: step 1/4. Catalyzes the condensation of the acetyl group of acetyl-CoA with 3-methyl-2-oxobutanoate (2-ketoisovalerate) to form 3-carboxy-3-hydroxy-4-methylpentanoate (2-isopropylmalate). This chain is 2-isopropylmalate synthase, found in Parafrankia sp. (strain EAN1pec).